Consider the following 290-residue polypeptide: 2-phosphoglycerate kinase (290 aa).

In terms of domain architecture, ATP-cone spans 1-89 (MIIVTDSERK…FWRELRRRKV (89 aa)).

It belongs to the 2-phosphoglycerate kinase family. A divalent metal cation serves as cofactor.

The catalysed reaction is (2R)-2-phosphoglycerate + ATP = (2R)-2,3-bisphosphoglycerate + ADP + H(+). The protein operates within thermoadapter biosynthesis; cyclic 2,3-diphosphoglycerate biosynthesis; cyclic 2,3-diphosphoglycerate from 2-phospho-D-glycerate: step 1/2. Its function is as follows. Catalyzes the phosphorylation of 2-phosphoglycerate to 2,3-diphosphoglycerate. Involved in the biosynthesis of cyclic 2,3-bisphosphoglycerate, a thermoprotectant. The protein is 2-phosphoglycerate kinase of Thermococcus kodakarensis (strain ATCC BAA-918 / JCM 12380 / KOD1) (Pyrococcus kodakaraensis (strain KOD1)).